Reading from the N-terminus, the 210-residue chain is Viral protein 1 (210 aa).

The protein is Viral protein 1 of Chaetoceros (Chaetoceros sp. DNA virus 7).